The chain runs to 383 residues: Lipid-A-disaccharide synthase (383 aa).

The protein belongs to the LpxB family.

The catalysed reaction is a lipid X + a UDP-2-N,3-O-bis[(3R)-3-hydroxyacyl]-alpha-D-glucosamine = a lipid A disaccharide + UDP + H(+). It participates in bacterial outer membrane biogenesis; LPS lipid A biosynthesis. Its function is as follows. Condensation of UDP-2,3-diacylglucosamine and 2,3-diacylglucosamine-1-phosphate to form lipid A disaccharide, a precursor of lipid A, a phosphorylated glycolipid that anchors the lipopolysaccharide to the outer membrane of the cell. This is Lipid-A-disaccharide synthase from Aliivibrio fischeri (strain ATCC 700601 / ES114) (Vibrio fischeri).